Here is a 523-residue protein sequence, read N- to C-terminus: Nondiscriminating glutamyl-tRNA synthetase EARS2, mitochondrial (523 aa).

The N-terminal 41 residues, 1 to 41, are a transit peptide targeting the mitochondrion; the sequence is MAALLRRLLQRERPSAASGRPVGRREANLGTDAGVAVRVRF. 40–42 lines the L-glutamate pocket; the sequence is RFA. A 'HIGH' region motif is present at residues 45–53; sequence PTGFLHLGG. His-50 contacts ATP. L-glutamate-binding positions include Glu-76, 228-232, and Arg-246; that span reads YHLAC. Glu-249 is an ATP binding site. Residue Lys-256 is modified to N6-succinyllysine. Residue 284–288 coordinates ATP; the sequence is KLSKR. Positions 284–288 match the 'KMSKS' region motif; that stretch reads KLSKR. The residue at position 486 (Lys-486) is an N6-acetyllysine.

The protein belongs to the class-I aminoacyl-tRNA synthetase family. Glutamate--tRNA ligase type 1 subfamily.

The protein localises to the mitochondrion matrix. The enzyme catalyses tRNA(Glx) + L-glutamate + ATP = L-glutamyl-tRNA(Glx) + AMP + diphosphate. The catalysed reaction is tRNA(Glu) + L-glutamate + ATP = L-glutamyl-tRNA(Glu) + AMP + diphosphate. It carries out the reaction tRNA(Gln) + L-glutamate + ATP = L-glutamyl-tRNA(Gln) + AMP + diphosphate. Its function is as follows. Non-discriminating glutamyl-tRNA synthetase that catalyzes aminoacylation of both mitochondrial tRNA(Glu) and tRNA(Gln) and participates in RNA aminoacylation for mitochondrial protein translation. Attachs glutamate to tRNA(Glu) or tRNA(Gln) in a two-step reaction: glutamate is first activated by ATP to form Glu-AMP and then transferred to the acceptor end of tRNA(Glu) or tRNA(Gln). In vitro, cytoplasmic tRNA(Gln) is slightly glutamylated, but with low activity. The polypeptide is Nondiscriminating glutamyl-tRNA synthetase EARS2, mitochondrial (Homo sapiens (Human)).